A 107-amino-acid polypeptide reads, in one-letter code: Quaternary ammonium compound-resistance protein QacG (107 aa).

A run of 4 helical transmembrane segments spans residues 1–21 (MHYL…SFLK), 26–46 (FTKL…FYFL), 57–77 (ITYA…SVIV), and 84–104 (LISI…NVFG).

It belongs to the drug/metabolite transporter (DMT) superfamily. Small multidrug resistance (SMR) (TC 2.A.7.1) family.

The protein localises to the cell membrane. Its function is as follows. Multidrug exporter. Is implicated for the resistance to bacteriocidal quaternary ammonium compounds. This is Quaternary ammonium compound-resistance protein QacG (qacG) from Staphylococcus sp. (strain ST94).